The chain runs to 275 residues: tRNA pseudouridine synthase A (275 aa).

Asp60 serves as the catalytic Nucleophile. Tyr119 contacts substrate.

It belongs to the tRNA pseudouridine synthase TruA family. As to quaternary structure, homodimer.

The catalysed reaction is uridine(38/39/40) in tRNA = pseudouridine(38/39/40) in tRNA. Formation of pseudouridine at positions 38, 39 and 40 in the anticodon stem and loop of transfer RNAs. This chain is tRNA pseudouridine synthase A, found in Synechocystis sp. (strain ATCC 27184 / PCC 6803 / Kazusa).